Consider the following 278-residue polypeptide: Large ribosomal subunit protein uL2 (278 aa).

Disordered stretches follow at residues 33–53 and 221–278; these read LTEG…TSRG and RGVA…KKKR. Residues 269–278 are compositionally biased toward basic residues; it reads IRSRHAKKKR.

This sequence belongs to the universal ribosomal protein uL2 family. Part of the 50S ribosomal subunit. Forms a bridge to the 30S subunit in the 70S ribosome.

Functionally, one of the primary rRNA binding proteins. Required for association of the 30S and 50S subunits to form the 70S ribosome, for tRNA binding and peptide bond formation. It has been suggested to have peptidyltransferase activity; this is somewhat controversial. Makes several contacts with the 16S rRNA in the 70S ribosome. The polypeptide is Large ribosomal subunit protein uL2 (Novosphingobium aromaticivorans (strain ATCC 700278 / DSM 12444 / CCUG 56034 / CIP 105152 / NBRC 16084 / F199)).